The following is a 708-amino-acid chain: Elongation factor G (708 aa).

Positions 8 to 290 (KRYRNIGISA…AVIQYLPAPM (283 aa)) constitute a tr-type G domain. GTP-binding positions include 17 to 24 (AHIDAGKT), 88 to 92 (DTPGH), and 142 to 145 (NKMD).

It belongs to the TRAFAC class translation factor GTPase superfamily. Classic translation factor GTPase family. EF-G/EF-2 subfamily.

The protein localises to the cytoplasm. Catalyzes the GTP-dependent ribosomal translocation step during translation elongation. During this step, the ribosome changes from the pre-translocational (PRE) to the post-translocational (POST) state as the newly formed A-site-bound peptidyl-tRNA and P-site-bound deacylated tRNA move to the P and E sites, respectively. Catalyzes the coordinated movement of the two tRNA molecules, the mRNA and conformational changes in the ribosome. This is Elongation factor G from Psychrobacter cryohalolentis (strain ATCC BAA-1226 / DSM 17306 / VKM B-2378 / K5).